We begin with the raw amino-acid sequence, 538 residues long: Endoglucanase 16 (538 aa).

A signal peptide spans 1 to 26 (MRWRRVGDVVAVALLLGAAAAAAAAA). The active-site Nucleophile is the Asp83. Residues His431, Asp483, and Glu492 contribute to the active site. The disordered stretch occupies residues 513–538 (RQESPSTTTTTTATTSSPEMGLSVNR). Residues 516–530 (SPSTTTTTTATTSSP) show a composition bias toward low complexity.

It belongs to the glycosyl hydrolase 9 (cellulase E) family.

It localises to the secreted. The catalysed reaction is Endohydrolysis of (1-&gt;4)-beta-D-glucosidic linkages in cellulose, lichenin and cereal beta-D-glucans.. This chain is Endoglucanase 16, found in Oryza sativa subsp. japonica (Rice).